Here is a 189-residue protein sequence, read N- to C-terminus: Large ribosomal subunit protein bL9 (189 aa).

It belongs to the bacterial ribosomal protein bL9 family.

Functionally, binds to the 23S rRNA. The sequence is that of Large ribosomal subunit protein bL9 from Brucella anthropi (strain ATCC 49188 / DSM 6882 / CCUG 24695 / JCM 21032 / LMG 3331 / NBRC 15819 / NCTC 12168 / Alc 37) (Ochrobactrum anthropi).